The following is a 123-amino-acid chain: Small ribosomal subunit protein uS17 (123 aa).

This sequence belongs to the universal ribosomal protein uS17 family. As to quaternary structure, part of the 30S ribosomal subunit.

Its function is as follows. One of the primary rRNA binding proteins, it binds specifically to the 5'-end of 16S ribosomal RNA. In Pyrobaculum aerophilum (strain ATCC 51768 / DSM 7523 / JCM 9630 / CIP 104966 / NBRC 100827 / IM2), this protein is Small ribosomal subunit protein uS17.